The following is a 109-amino-acid chain: Cell division protein ZapA (109 aa).

The stretch at 71 to 99 (KTRDYASNMEQRIRMLQQTIEQALLEQGR) forms a coiled coil.

It belongs to the ZapA family. Type 1 subfamily. Homodimer. Interacts with FtsZ.

The protein resides in the cytoplasm. Functionally, activator of cell division through the inhibition of FtsZ GTPase activity, therefore promoting FtsZ assembly into bundles of protofilaments necessary for the formation of the division Z ring. It is recruited early at mid-cell but it is not essential for cell division. The protein is Cell division protein ZapA of Serratia proteamaculans (strain 568).